The primary structure comprises 247 residues: Ribonuclease PH (247 aa).

Phosphate contacts are provided by residues arginine 87 and 125–127 (GTR).

It belongs to the RNase PH family. In terms of assembly, homohexameric ring arranged as a trimer of dimers.

It carries out the reaction tRNA(n+1) + phosphate = tRNA(n) + a ribonucleoside 5'-diphosphate. In terms of biological role, phosphorolytic 3'-5' exoribonuclease that plays an important role in tRNA 3'-end maturation. Removes nucleotide residues following the 3'-CCA terminus of tRNAs; can also add nucleotides to the ends of RNA molecules by using nucleoside diphosphates as substrates, but this may not be physiologically important. Probably plays a role in initiation of 16S rRNA degradation (leading to ribosome degradation) during starvation. The polypeptide is Ribonuclease PH (Nostoc sp. (strain PCC 7120 / SAG 25.82 / UTEX 2576)).